Consider the following 299-residue polypeptide: Coenzyme PQQ synthesis protein B (299 aa).

The protein belongs to the PqqB family.

It participates in cofactor biosynthesis; pyrroloquinoline quinone biosynthesis. In terms of biological role, may be involved in the transport of PQQ or its precursor to the periplasm. The polypeptide is Coenzyme PQQ synthesis protein B (Methylorubrum extorquens (strain CM4 / NCIMB 13688) (Methylobacterium extorquens)).